A 265-amino-acid polypeptide reads, in one-letter code: Energy-coupling factor transporter ATP-binding protein EcfA1 (265 aa).

An ABC transporter domain is found at 2–236 (IKIKNLVFRY…KEIVELAKID (235 aa)). ATP is bound at residue 36 to 43 (GHNGSGKS).

It belongs to the ABC transporter superfamily. Energy-coupling factor EcfA family. As to quaternary structure, forms a stable energy-coupling factor (ECF) transporter complex composed of 2 membrane-embedded substrate-binding proteins (S component), 2 ATP-binding proteins (A component) and 2 transmembrane proteins (T component).

The protein localises to the cell membrane. Its function is as follows. ATP-binding (A) component of a common energy-coupling factor (ECF) ABC-transporter complex. Unlike classic ABC transporters this ECF transporter provides the energy necessary to transport a number of different substrates. The protein is Energy-coupling factor transporter ATP-binding protein EcfA1 of Mycoplasmopsis pulmonis (strain UAB CTIP) (Mycoplasma pulmonis).